A 90-amino-acid polypeptide reads, in one-letter code: Small ribosomal subunit protein bS16 (90 aa).

The protein belongs to the bacterial ribosomal protein bS16 family.

The protein is Small ribosomal subunit protein bS16 of Lactobacillus acidophilus (strain ATCC 700396 / NCK56 / N2 / NCFM).